The sequence spans 143 residues: Transcriptional regulator MraZ (143 aa).

SpoVT-AbrB domains are found at residues 5 to 47 and 76 to 119; these read EFEH…PMTE and ATEC…SAER.

This sequence belongs to the MraZ family. Forms oligomers.

The protein localises to the cytoplasm. The protein resides in the nucleoid. This chain is Transcriptional regulator MraZ, found in Levilactobacillus brevis (strain ATCC 367 / BCRC 12310 / CIP 105137 / JCM 1170 / LMG 11437 / NCIMB 947 / NCTC 947) (Lactobacillus brevis).